The primary structure comprises 713 residues: MAPSVDSIATSVANSLSNGLHAAAAANGGDVHKKTAGAGSLLPTTETTQLDIVERILADAGATDQIKLDGYTLTLGDVVGAARRGRSVKVADSPHIREKIDASVEFLRTQLDNSVYGVTTGFGGSADTRTEDAISLQKALLEHQLCGVLPTSMDGFALGRGLENSLPLEVVRGAMTIRVNSLTRGHSAVRIVVLEALTNFLNHGITPIVPLRGTISASGDLSPLSYIAASITGHPDSKVHVDGKIMSAQEAIALKGLQPVVLGPKEGLGLVNGTAVSASMATLALTDAHVLSLLAQALTALTVEAMVGHAGSFHPFLHDVTRPHPTQIEVARNIRTLLEGSKYAVHHETEVKVKDDEGILRQDRYPLRCSPQWLGPLVSDMIHAHAVLSLEAGQSTTDNPLIDLENKMTHHGGAFMASSVGNTMEKTRLAVALMGKVSFTQLTEMLNAGMNRALPSCLAAEDPSLSYHCKGLDIAAAAYTSELGHLANPVSTHVQPAEMGNQAINSLALISARRTAEANDVLSLLLATHLYCVLQAVDLRAMEFEHTKAFEPMVTELLKQHFGALATAEVEDKVRKSIYKRLQQNNSYDLEQRWHDTFSVATGAVVEALAGQEVSLASLNAWKVACAEKAIALTRSVRDSFWAAPSSSSPALKYLSPRTRVLYSFVREEVGVKARRGDVYLGKQEVTIGTNVSRIYEAIKSGCIAPVLVKMMA.

The active-site Proton donor/acceptor is the Y116. Positions 217–219 (ASG) form a cross-link, 5-imidazolinone (Ala-Gly). S218 bears the 2,3-didehydroalanine (Ser) mark. N272, Q362, R368, N399, K470, E498, and N501 together coordinate (E)-cinnamate.

This sequence belongs to the PAL/histidase family. Homotetramer. In terms of processing, contains an active site 4-methylidene-imidazol-5-one (MIO), which is formed autocatalytically by cyclization and dehydration of residues Ala-Ser-Gly.

The protein resides in the cytoplasm. The catalysed reaction is L-phenylalanine = (E)-cinnamate + NH4(+). Its pathway is phenylpropanoid metabolism; trans-cinnamate biosynthesis; trans-cinnamate from L-phenylalanine: step 1/1. Functionally, catalyzes the non-oxidative deamination of L-phenylalanine to form trans-cinnamic acid and a free ammonium ion. Facilitates the commitment step in phenylpropanoid pathways that produce secondary metabolites such as lignins, coumarins and flavonoids. In Rhodotorula mucilaginosa (Yeast), this protein is Phenylalanine ammonia-lyase (PAL).